The chain runs to 319 residues: Epoxyqueuosine reductase (319 aa).

D146 (proton donor) is an active-site residue. One can recognise a 4Fe-4S ferredoxin-type domain in the interval 188-220 (ASLPADQPARSLCGHCQRCLPACPTAAITEPFV). The [4Fe-4S] cluster site is built by C200, C203, C206, C210, C226, C250, C253, and C257.

Belongs to the QueG family. In terms of assembly, monomer. Requires cob(II)alamin as cofactor. [4Fe-4S] cluster serves as cofactor.

It is found in the cytoplasm. The catalysed reaction is epoxyqueuosine(34) in tRNA + AH2 = queuosine(34) in tRNA + A + H2O. It participates in tRNA modification; tRNA-queuosine biosynthesis. Catalyzes the conversion of epoxyqueuosine (oQ) to queuosine (Q), which is a hypermodified base found in the wobble positions of tRNA(Asp), tRNA(Asn), tRNA(His) and tRNA(Tyr). The chain is Epoxyqueuosine reductase from Synechococcus sp. (strain RCC307).